Consider the following 106-residue polypeptide: Small ribosomal subunit protein bS16 (106 aa).

Belongs to the bacterial ribosomal protein bS16 family.

The sequence is that of Small ribosomal subunit protein bS16 from Protochlamydia amoebophila (strain UWE25).